The following is a 460-amino-acid chain: ATP synthase subunit beta (460 aa).

150-157 (GGAGVGKT) contributes to the ATP binding site.

It belongs to the ATPase alpha/beta chains family. As to quaternary structure, F-type ATPases have 2 components, CF(1) - the catalytic core - and CF(0) - the membrane proton channel. CF(1) has five subunits: alpha(3), beta(3), gamma(1), delta(1), epsilon(1). CF(0) has three main subunits: a(1), b(2) and c(9-12). The alpha and beta chains form an alternating ring which encloses part of the gamma chain. CF(1) is attached to CF(0) by a central stalk formed by the gamma and epsilon chains, while a peripheral stalk is formed by the delta and b chains.

The protein localises to the cell inner membrane. The enzyme catalyses ATP + H2O + 4 H(+)(in) = ADP + phosphate + 5 H(+)(out). Its function is as follows. Produces ATP from ADP in the presence of a proton gradient across the membrane. The catalytic sites are hosted primarily by the beta subunits. This is ATP synthase subunit beta from Yersinia pestis bv. Antiqua (strain Angola).